Reading from the N-terminus, the 191-residue chain is Protein Ves (191 aa).

This sequence belongs to the Ves family.

This Shigella flexneri protein is Protein Ves.